A 367-amino-acid polypeptide reads, in one-letter code: Leucine-rich repeat-containing protein 28 (367 aa).

LRR repeat units lie at residues 16 to 36 (KHKN…ELLK), 42 to 63 (YLER…LAQK), 66 to 87 (NLVE…IGSL), 89 to 111 (KLQS…GRLK), 112 to 133 (SLRH…IGKL), 135 to 156 (ELQT…LYQC), 158 to 179 (SLQY…LCQL), 181 to 202 (SLNE…LGRS), and 204 to 226 (ELQY…LYNK).

The protein is Leucine-rich repeat-containing protein 28 (lrrc28) of Xenopus tropicalis (Western clawed frog).